The chain runs to 60 residues: Large ribosomal subunit protein bL32 (60 aa).

The segment at 1–43 is disordered; it reads MAVQQNRKTRSRRGMRRSHDALTGKTLSVDSTTGEKHLRHHVT. Positions 7 to 16 are enriched in basic residues; the sequence is RKTRSRRGMR.

This sequence belongs to the bacterial ribosomal protein bL32 family.

The sequence is that of Large ribosomal subunit protein bL32 from Saccharophagus degradans (strain 2-40 / ATCC 43961 / DSM 17024).